A 363-amino-acid polypeptide reads, in one-letter code: 1,2-Dihydrovomilenine reductase (363 aa).

Residues 24–352 (GILSPFKFSR…KGDVRYRFVI (329 aa)) enclose the Enoyl reductase (ER) domain. Cys-51 lines the Zn(2+) pocket. Ser-53 provides a ligand contact to NADP(+). Residues Asp-54, Glu-74, Cys-104, Cys-107, Cys-110, and Cys-118 each coordinate Zn(2+). Residues Leu-193, Gly-195, Leu-196, Ser-215, Thr-216, Ser-217, Lys-220, Lys-221, Val-278, Ala-280, Thr-302, and Arg-349 each contribute to the NADP(+) site.

Belongs to the zinc-containing alcohol dehydrogenase family. Class-P subfamily. Homodimer. It depends on Zn(2+) as a cofactor. Mainly expressed in mature roots and, to a lower extent, in stems and leaves.

Its subcellular location is the cytoplasm. It catalyses the reaction 17-O-acetylnorajmaline + NADP(+) = (2R)-1,2-dihydrovomilenine + NADPH + 2 H(+). The enzyme catalyses (20S)-19,20-dihydrovomilenine + NADP(+) = vomilenine + NADPH + H(+). The protein operates within alkaloid biosynthesis; ajmaline biosynthesis. Alcohol dehydrogenase involved in the biosynthesis of ajmaline-type monoterpenoid indole alkaloids (MIAs) natural products, important plant-derived pharmaceuticals used in the therapy of heart disorders. Catalyzes the conversion of 1,2-dihydrovomilenine to 17-O-acetylnorajmaline, an intermediate chemical in the biosynthesis of ajmaline. Also able, with a lower efficiency, to convert vomilenine into 19,20-dihydrovomilenine. This chain is 1,2-Dihydrovomilenine reductase, found in Rauvolfia serpentina (Serpentine wood).